Here is a 308-residue protein sequence, read N- to C-terminus: Putative proline iminopeptidase (308 aa).

An AB hydrolase-1 domain is found at 30 to 290; sequence KPVLYIHGGP…LYVTNNAGHS (261 aa). Ser-105 acts as the Nucleophile in catalysis. Residue Asp-261 is part of the active site. Residue His-289 is the Proton donor of the active site.

The protein belongs to the peptidase S33 family.

Its subcellular location is the cytoplasm. It carries out the reaction Release of N-terminal proline from a peptide.. Specifically catalyzes the removal of N-terminal proline residues from peptides. The polypeptide is Putative proline iminopeptidase (pip) (Mycoplasma genitalium (strain ATCC 33530 / DSM 19775 / NCTC 10195 / G37) (Mycoplasmoides genitalium)).